Consider the following 515-residue polypeptide: Vesicular acetylcholine transporter (515 aa).

At 1–40 (MGVTMAVGLAKAAMGKISSAIGERSKRISGAMNEPRRKRK) the chain is on the cytoplasmic side. Residues 41-61 (ILLVIVCIAMLLDNMLYMVIV) traverse the membrane as a helical segment. Over 62–112 (PIIPNYLETIRTYKLVYITTPSNGTNGSLLNSTQRAVLERNPNANEDIQIG) the chain is Lumenal, vesicle. Asn84, Asn87, and Asn92 each carry an N-linked (GlcNAc...) asparagine glycan. Residues 113–133 (VLFASKAILQLLSNPFTGTFI) traverse the membrane as a helical segment. Topologically, residues 134 to 139 (DRVGYD) are cytoplasmic. The helical transmembrane segment at 140-160 (IPLLIGLTIMFFSTITFAFGE) threads the bilayer. At 161 to 169 (SYAVLFAAR) the chain is on the lumenal, vesicle side. Residues 170-190 (SLQGLGSAFADTSGIAMIADK) traverse the membrane as a helical segment. Over 191 to 201 (YTEESERTQAL) the chain is Cytoplasmic. Residues 202–222 (GIALAFISFGSLVAPPFGGVL) traverse the membrane as a helical segment. Over 223–229 (YQFAGKW) the chain is Lumenal, vesicle. Residues 230–250 (VPFLVLSFVCLLDGILLLMVV) form a helical membrane-spanning segment. At 251–271 (TPFASRTRENMLQGTPIYKLM) the chain is on the cytoplasmic side. Residues 272–292 (IDPYIAVVAGALTTCNIPLAF) traverse the membrane as a helical segment. Over 293–310 (LEPTISNWMKKTMNASEW) the chain is Lumenal, vesicle. The N-linked (GlcNAc...) asparagine glycan is linked to Asn306. A helical transmembrane segment spans residues 311 to 331 (QMGITWLPAFFPHILGVYITV). At 332–341 (KLAAKYPNYQ) the chain is on the cytoplasmic side. Residues 342 to 362 (WFYGAVGLVIIGASSCTIPAC) traverse the membrane as a helical segment. At 363–367 (RNFEE) the chain is on the lumenal, vesicle side. A helical membrane pass occupies residues 368-388 (LIIPLCALCFGIALVDTALLP). Topologically, residues 389 to 404 (TLAFLVDIRYVSVYGS) are cytoplasmic. The chain crosses the membrane as a helical span at residues 405–425 (VYAIADISYSVAYALGPIMAG). The Lumenal, vesicle segment spans residues 426–432 (QIVHDLG). The chain crosses the membrane as a helical span at residues 433–453 (FVQLNLGMGLVNILYAPALLF). Residues 454–515 (LRNVCQMKPS…VLSDQEGYSE (62 aa)) lie on the Cytoplasmic side of the membrane. Positions 489 to 515 (AAKEPHGSSSGNHSVHAVLSDQEGYSE) are disordered.

Belongs to the major facilitator superfamily. Vesicular transporter family. As to expression, electric lobe.

The protein localises to the membrane. Involved in acetylcholine transport into synaptic vesicles. The polypeptide is Vesicular acetylcholine transporter (Tetronarce californica (Pacific electric ray)).